Consider the following 471-residue polypeptide: Monocarboxylate transporter 11 (471 aa).

The segment covering 1 to 13 (MPAPQRKHRRGGF) has biased composition (basic residues). A disordered region spans residues 1–31 (MPAPQRKHRRGGFSHRCFPTPQTAMTPQPAG). The Cytoplasmic portion of the chain corresponds to 1-35 (MPAPQRKHRRGGFSHRCFPTPQTAMTPQPAGPPDG). The segment covering 19-28 (PTPQTAMTPQ) has biased composition (low complexity). 12 helical membrane passes run 36–56 (GWGWVVAAAAFAINGLSYGLL), 78–98 (AWISALALAVQQAASPVGSAL), 106–126 (PVVMVGGVLASLGFVFSAFAS), 131–151 (LYLGLGLLAGFGWALVFAPAL), 163–183 (VLAVGLALTGNGASSLLLAPA), 198–218 (LLLGAITLHLTPCGALLLPLV), 243–263 (AFSIFALGTALVGGGYFVPYV), 273–293 (GLGGYGAALVVAVAAMGDAGA), 312–332 (LAVFGALTGLGLWVVGLVPVV), 333–353 (GGEESWGGPLLAAAVAYGLSA), 367–389 (LVGVGGVVQATGLVMMLMSLGGL), and 407–427 (ASFLLSGSLILSGSFIYIGLP). Over 428–471 (RALPSCGPASPPATPPPETGELLPAPQAVLLSPGGPGSTLDTTC) the chain is Cytoplasmic.

The protein belongs to the major facilitator superfamily. Monocarboxylate porter (TC 2.A.1.13) family. In terms of assembly, interacts with isoform 2 of BSG. Expressed in liver, salivary gland and thyroid.

It localises to the endoplasmic reticulum membrane. Its subcellular location is the cell membrane. The catalysed reaction is pyruvate(out) + H(+)(out) = pyruvate(in) + H(+)(in). In terms of biological role, proton-linked monocarboxylate transporter. It catalyzes the transport of pyruvate across the plasma membrane. Probably involved in hepatic lipid metabolism: overexpression results in an increase of triacylglycerol(TAG) levels, small increases in intracellular diacylglycerols and decreases in lysophosphatidylcholine, cholesterol ester and sphingomyelin lipids. This Homo sapiens (Human) protein is Monocarboxylate transporter 11 (SLC16A11).